We begin with the raw amino-acid sequence, 781 residues long: Sialidase (781 aa).

An N-terminal signal peptide occupies residues 1-24 (MRFKNVKKTALMLAMFGMATSSNA). Arg224 serves as a coordination point for substrate. Asp250 (proton acceptor) is an active-site residue. BNR repeat units lie at residues 263–274 (RTSRDGGITWDT) and 585–596 (IYSDDGGSNWQT). Glu619 is a catalytic residue. Arg635 is a substrate binding site. Residues 653–664 (FLSKDGGITWSL) form a BNR 3 repeat. Arg712 serves as a coordination point for substrate. A BNR 4 repeat occupies 718 to 729 (WFSFDEGVTWKG). Tyr740 acts as the Nucleophile in catalysis.

This sequence belongs to the glycosyl hydrolase 33 family. Monomer. Ca(2+) is required as a cofactor.

The protein localises to the secreted. It carries out the reaction Hydrolysis of alpha-(2-&gt;3)-, alpha-(2-&gt;6)-, alpha-(2-&gt;8)- glycosidic linkages of terminal sialic acid residues in oligosaccharides, glycoproteins, glycolipids, colominic acid and synthetic substrates.. Functionally, cleaves the terminal sialic acid (N-acetyl neuraminic acid) from carbohydrate chains in glycoproteins providing free sialic acid which can be used as carbon and energy sources. Sialidases have been suggested to be pathogenic factors in microbial infections. Facilitates cholera toxin binding to host intestinal epithelial cells by converting cell surface polysialogangliosides to GM1 monogangliosides. In Vibrio cholerae serotype O1 (strain ATCC 39541 / Classical Ogawa 395 / O395), this protein is Sialidase (nanH).